Here is a 111-residue protein sequence, read N- to C-terminus: Phosphoribosyl-ATP pyrophosphatase (111 aa).

It belongs to the PRA-PH family.

The protein resides in the cytoplasm. The catalysed reaction is 1-(5-phospho-beta-D-ribosyl)-ATP + H2O = 1-(5-phospho-beta-D-ribosyl)-5'-AMP + diphosphate + H(+). It functions in the pathway amino-acid biosynthesis; L-histidine biosynthesis; L-histidine from 5-phospho-alpha-D-ribose 1-diphosphate: step 2/9. In Pseudomonas entomophila (strain L48), this protein is Phosphoribosyl-ATP pyrophosphatase.